The primary structure comprises 428 residues: 3-phosphoshikimate 1-carboxyvinyltransferase (428 aa).

The 3-phosphoshikimate site is built by K22, S23, and R27. Phosphoenolpyruvate is bound at residue K22. Residues G96 and R124 each contribute to the phosphoenolpyruvate site. The 3-phosphoshikimate site is built by S170, S171, Q172, S198, D314, N337, and K341. Phosphoenolpyruvate is bound at residue Q172. The active-site Proton acceptor is D314. Phosphoenolpyruvate-binding residues include R345, R387, and K412.

This sequence belongs to the EPSP synthase family. Monomer.

The protein localises to the cytoplasm. It carries out the reaction 3-phosphoshikimate + phosphoenolpyruvate = 5-O-(1-carboxyvinyl)-3-phosphoshikimate + phosphate. The protein operates within metabolic intermediate biosynthesis; chorismate biosynthesis; chorismate from D-erythrose 4-phosphate and phosphoenolpyruvate: step 6/7. Catalyzes the transfer of the enolpyruvyl moiety of phosphoenolpyruvate (PEP) to the 5-hydroxyl of shikimate-3-phosphate (S3P) to produce enolpyruvyl shikimate-3-phosphate and inorganic phosphate. The protein is 3-phosphoshikimate 1-carboxyvinyltransferase of Shewanella amazonensis (strain ATCC BAA-1098 / SB2B).